The primary structure comprises 61 residues: Photosystem II reaction center protein K (61 aa).

The propeptide occupies 1-24 (MINIFSFICIYLHSALYSSSFFFG). The helical transmembrane segment at 40 to 60 (MPVIPLFFFLLAFVWQAAVSF) threads the bilayer.

It belongs to the PsbK family. In terms of assembly, PSII is composed of 1 copy each of membrane proteins PsbA, PsbB, PsbC, PsbD, PsbE, PsbF, PsbH, PsbI, PsbJ, PsbK, PsbL, PsbM, PsbT, PsbX, PsbY, PsbZ, Psb30/Ycf12, at least 3 peripheral proteins of the oxygen-evolving complex and a large number of cofactors. It forms dimeric complexes.

The protein resides in the plastid. Its subcellular location is the chloroplast thylakoid membrane. In terms of biological role, one of the components of the core complex of photosystem II (PSII). PSII is a light-driven water:plastoquinone oxidoreductase that uses light energy to abstract electrons from H(2)O, generating O(2) and a proton gradient subsequently used for ATP formation. It consists of a core antenna complex that captures photons, and an electron transfer chain that converts photonic excitation into a charge separation. The sequence is that of Photosystem II reaction center protein K from Pelargonium hortorum (Common geranium).